Here is a 162-residue protein sequence, read N- to C-terminus: Phosphopantetheine adenylyltransferase (162 aa).

Thr10 contacts substrate. ATP contacts are provided by residues 10-11 (TF) and His18. Residues Lys42, Leu74, and Arg88 each coordinate substrate. ATP-binding positions include 89–91 (GLR), Glu99, and 124–130 (FSCISST).

This sequence belongs to the bacterial CoaD family. As to quaternary structure, homohexamer. Requires Mg(2+) as cofactor.

It localises to the cytoplasm. The enzyme catalyses (R)-4'-phosphopantetheine + ATP + H(+) = 3'-dephospho-CoA + diphosphate. It functions in the pathway cofactor biosynthesis; coenzyme A biosynthesis; CoA from (R)-pantothenate: step 4/5. In terms of biological role, reversibly transfers an adenylyl group from ATP to 4'-phosphopantetheine, yielding dephospho-CoA (dPCoA) and pyrophosphate. In Francisella tularensis subsp. novicida (strain U112), this protein is Phosphopantetheine adenylyltransferase.